The primary structure comprises 163 residues: NF-kappa-B inhibitor-interacting Ras-like protein 2 (163 aa).

Residues 1-163 form a small GTPase-like region; it reads MGKSCKVVIC…SANWNLHPDH (163 aa). 11–18 contributes to the GTP binding site; sequence GQHGVGKT. Positions 35–43 match the Effector region motif; it reads MIETQEDIY. Residues 61-65 and 120-123 each bind GTP; these read DTRGL and NKSD.

It belongs to the small GTPase superfamily. Ras family. KappaB-Ras subfamily.

It localises to the cytoplasm. In terms of biological role, atypical Ras-like protein that acts as a potent regulator of NF-kappa-B activity by preventing the degradation of NF-kappa-B inhibitor beta (NFKBIB) by most signals, explaining why NFKBIB is more resistant to degradation. The polypeptide is NF-kappa-B inhibitor-interacting Ras-like protein 2 (nkiras2) (Xenopus laevis (African clawed frog)).